A 117-amino-acid polypeptide reads, in one-letter code: Holo-[acyl-carrier-protein] synthase (117 aa).

2 residues coordinate Mg(2+): Asp-8 and Glu-57.

The protein belongs to the P-Pant transferase superfamily. AcpS family. Mg(2+) serves as cofactor.

The protein resides in the cytoplasm. The enzyme catalyses apo-[ACP] + CoA = holo-[ACP] + adenosine 3',5'-bisphosphate + H(+). Functionally, transfers the 4'-phosphopantetheine moiety from coenzyme A to a Ser of acyl-carrier-protein. This chain is Holo-[acyl-carrier-protein] synthase, found in Limosilactobacillus reuteri (Lactobacillus reuteri).